We begin with the raw amino-acid sequence, 234 residues long: ATP synthase subunit a 1 (234 aa).

Transmembrane regions (helical) follow at residues 20 to 40, 76 to 96, 105 to 125, 162 to 184, and 195 to 215; these read ETVV…ILLT, LLPL…LGVI, DLSV…AYGV, LFGN…GFLA, and EALV…AGAM.

Belongs to the ATPase A chain family. As to quaternary structure, F-type ATPases have 2 components, CF(1) - the catalytic core - and CF(0) - the membrane proton channel. CF(1) has five subunits: alpha(3), beta(3), gamma(1), delta(1), epsilon(1). CF(0) has three main subunits: a(1), b(2) and c(9-12). The alpha and beta chains form an alternating ring which encloses part of the gamma chain. CF(1) is attached to CF(0) by a central stalk formed by the gamma and epsilon chains, while a peripheral stalk is formed by the delta and b chains.

It is found in the cell inner membrane. Its function is as follows. Key component of the proton channel; it plays a direct role in the translocation of protons across the membrane. The protein is ATP synthase subunit a 1 of Hahella chejuensis (strain KCTC 2396).